Consider the following 74-residue polypeptide: NADH dehydrogenase [ubiquinone] 1 alpha subcomplex assembly factor 8 (74 aa).

In terms of domain architecture, CHCH spans 22 to 69; that stretch reads LAACGAEASAYGKCVQASTAPGGRLSKDLCVREFEALRSCFAAAAKKT. Short sequence motifs (cx9C motif) lie at residues 25-35 and 51-61; these read CGAEASAYGKC and CVREFEALRSC. 2 disulfide bridges follow: cysteine 25–cysteine 61 and cysteine 35–cysteine 51.

In terms of assembly, interacts with NDUFAF5.

The protein localises to the mitochondrion. Functionally, involved in the assembly of mitochondrial NADH:ubiquinone oxidoreductase complex (complex I, MT-ND1). Required to stabilize NDUFAF5. In Mus musculus (Mouse), this protein is NADH dehydrogenase [ubiquinone] 1 alpha subcomplex assembly factor 8.